The following is a 131-amino-acid chain: UPF0102 protein YraN (131 aa).

Residues 1–19 show a composition bias toward polar residues; that stretch reads MATVPTRSGSPRQLTTKQT. The interval 1 to 20 is disordered; it reads MATVPTRSGSPRQLTTKQTG.

It belongs to the UPF0102 family.

This is UPF0102 protein YraN from Escherichia coli (strain 55989 / EAEC).